We begin with the raw amino-acid sequence, 358 residues long: Pseudouridylate synthase RPUSD4, mitochondrial (358 aa).

The N-terminal 12 residues, 1 to 12, are a transit peptide targeting the mitochondrion; sequence MRHAREVTFARL.

Belongs to the pseudouridine synthase RluA family.

Its subcellular location is the mitochondrion matrix. The protein localises to the nucleus. It is found in the cytoplasm. It catalyses the reaction uridine in 5S rRNA = pseudouridine in 5S rRNA. The catalysed reaction is a uridine in tRNA = a pseudouridine in tRNA. It carries out the reaction a uridine in mRNA = a pseudouridine in mRNA. In terms of biological role, catalyzes uridine to pseudouridine isomerization (pseudouridylation) of different mitochondrial RNA substrates. Acts on position 1397 in 16S mitochondrial ribosomal RNA (16S mt-rRNA). This modification is required for the assembly of 16S mt-rRNA into a functional mitochondrial ribosome. Acts on position 39 in mitochondrial tRNA(Phe). Also catalyzes pseudouridylation of mRNAs in nucleus: acts as a regulator of pre-mRNA splicing by mediating pseudouridylation of pre-mRNAs at locations associated with alternatively spliced regions. Pseudouridylation of pre-mRNAs near splice sites directly regulates mRNA splicing and mRNA 3'-end processing. This is Pseudouridylate synthase RPUSD4, mitochondrial from Danio rerio (Zebrafish).